Reading from the N-terminus, the 285-residue chain is 4-diphosphocytidyl-2-C-methyl-D-erythritol kinase (285 aa).

Residue K12 is part of the active site. Residue 95-105 participates in ATP binding; the sequence is PMGGGVGGGSS. Residue D137 is part of the active site.

The protein belongs to the GHMP kinase family. IspE subfamily.

The catalysed reaction is 4-CDP-2-C-methyl-D-erythritol + ATP = 4-CDP-2-C-methyl-D-erythritol 2-phosphate + ADP + H(+). Its pathway is isoprenoid biosynthesis; isopentenyl diphosphate biosynthesis via DXP pathway; isopentenyl diphosphate from 1-deoxy-D-xylulose 5-phosphate: step 3/6. Catalyzes the phosphorylation of the position 2 hydroxy group of 4-diphosphocytidyl-2C-methyl-D-erythritol. This chain is 4-diphosphocytidyl-2-C-methyl-D-erythritol kinase, found in Actinobacillus pleuropneumoniae serotype 3 (strain JL03).